The following is a 261-amino-acid chain: Thioesterase TesA (261 aa).

Catalysis depends on residues S104, D208, and H236.

It belongs to the thioesterase family.

It catalyses the reaction a fatty acyl-CoA + H2O = a fatty acid + CoA + H(+). Involved in the synthesis of both phthiocerol dimycocerosates (PDIMs) and phenolic glycolipids (PGLs), which are structurally related lipids non-covalently bound to the outer cell wall layer of M.tuberculosis and are important virulence factors. The protein is Thioesterase TesA (tesA) of Mycobacterium leprae (strain TN).